A 663-amino-acid polypeptide reads, in one-letter code: UvrABC system protein B (663 aa).

In terms of domain architecture, Helicase ATP-binding spans 31–271 (DNIEGGEKAQ…EASIAKIQAE (241 aa)). 44-51 (GATGTGKT) lines the ATP pocket. The Beta-hairpin signature appears at 97 to 120 (YYDYYQPEAYVPSSDTYIEKDSSV). One can recognise a Helicase C-terminal domain in the interval 435–601 (QMDDLLGEIN…TIKKEIRDLI (167 aa)). The region spanning 627-662 (QEAIKKLQKQMHEAAELLDFELAAQIRDMVLELKSM) is the UVR domain.

Belongs to the UvrB family. As to quaternary structure, forms a heterotetramer with UvrA during the search for lesions. Interacts with UvrC in an incision complex.

It localises to the cytoplasm. The UvrABC repair system catalyzes the recognition and processing of DNA lesions. A damage recognition complex composed of 2 UvrA and 2 UvrB subunits scans DNA for abnormalities. Upon binding of the UvrA(2)B(2) complex to a putative damaged site, the DNA wraps around one UvrB monomer. DNA wrap is dependent on ATP binding by UvrB and probably causes local melting of the DNA helix, facilitating insertion of UvrB beta-hairpin between the DNA strands. Then UvrB probes one DNA strand for the presence of a lesion. If a lesion is found the UvrA subunits dissociate and the UvrB-DNA preincision complex is formed. This complex is subsequently bound by UvrC and the second UvrB is released. If no lesion is found, the DNA wraps around the other UvrB subunit that will check the other stand for damage. The protein is UvrABC system protein B of Streptococcus uberis (strain ATCC BAA-854 / 0140J).